We begin with the raw amino-acid sequence, 133 residues long: Ribonuclease P protein component (133 aa).

It belongs to the RnpA family. As to quaternary structure, consists of a catalytic RNA component (M1 or rnpB) and a protein subunit.

It carries out the reaction Endonucleolytic cleavage of RNA, removing 5'-extranucleotides from tRNA precursor.. Its function is as follows. RNaseP catalyzes the removal of the 5'-leader sequence from pre-tRNA to produce the mature 5'-terminus. It can also cleave other RNA substrates such as 4.5S RNA. The protein component plays an auxiliary but essential role in vivo by binding to the 5'-leader sequence and broadening the substrate specificity of the ribozyme. The polypeptide is Ribonuclease P protein component (Corynebacterium efficiens (strain DSM 44549 / YS-314 / AJ 12310 / JCM 11189 / NBRC 100395)).